The primary structure comprises 369 residues: Mitogen-activated protein kinase 11 (369 aa).

One can recognise a Protein kinase domain in the interval 40-326 (VPPLRPIGRG…VDEALCHPYL (287 aa)). ATP is bound by residues 46–54 (IGRGASGIV) and Lys-69. The active-site Proton acceptor is the Asp-166. Thr-198 bears the Phosphothreonine mark. The short motif at 198–200 (TEY) is the TXY element. Tyr-200 is modified (phosphotyrosine). Thr-203 carries the phosphothreonine modification.

Belongs to the protein kinase superfamily. CMGC Ser/Thr protein kinase family. MAP kinase subfamily. As to quaternary structure, interacts with MKK1, MKK2 and MKK6. Post-translationally, dually phosphorylated on Thr-198 and Tyr-200, which activates the enzyme.

It carries out the reaction L-seryl-[protein] + ATP = O-phospho-L-seryl-[protein] + ADP + H(+). It catalyses the reaction L-threonyl-[protein] + ATP = O-phospho-L-threonyl-[protein] + ADP + H(+). Activated by threonine and tyrosine phosphorylation. This chain is Mitogen-activated protein kinase 11 (MPK11), found in Arabidopsis thaliana (Mouse-ear cress).